A 229-amino-acid polypeptide reads, in one-letter code: Peptidase E (229 aa).

Residues S120, D135, and H157 each act as charge relay system in the active site.

This sequence belongs to the peptidase S51 family.

It localises to the cytoplasm. The catalysed reaction is Dipeptidase E catalyzes the hydrolysis of dipeptides Asp-|-Xaa. It does not act on peptides with N-terminal Glu, Asn or Gln, nor does it cleave isoaspartyl peptides.. Functionally, hydrolyzes dipeptides containing N-terminal aspartate residues. May play a role in allowing the cell to use peptide aspartate to spare carbon otherwise required for the synthesis of the aspartate family of amino acids. This Escherichia coli O6:K15:H31 (strain 536 / UPEC) protein is Peptidase E.